The chain runs to 88 residues: Small ribosomal subunit protein bS20 (88 aa).

Belongs to the bacterial ribosomal protein bS20 family.

Functionally, binds directly to 16S ribosomal RNA. The polypeptide is Small ribosomal subunit protein bS20 (Rhodopseudomonas palustris (strain BisA53)).